The following is an 82-amino-acid chain: Sulfur carrier protein TusA (82 aa).

Cys19 functions as the Cysteine persulfide intermediate in the catalytic mechanism.

It belongs to the sulfur carrier protein TusA family.

Its subcellular location is the cytoplasm. Its function is as follows. Sulfur carrier protein which probably makes part of a sulfur-relay system. This chain is Sulfur carrier protein TusA, found in Vibrio campbellii (strain ATCC BAA-1116).